We begin with the raw amino-acid sequence, 589 residues long: uncharacterized protein (589 aa).

The region spanning 242–314 (TALEVRNIPE…RFIKIFWYNP (73 aa)) is the RRM domain. 3 disordered regions span residues 322 to 348 (PKKFASHKSPTTSDSSNVESSEDVDPA), 443 to 465 (ESPAASNGSHHPYASGLPQRGTN), and 566 to 589 (TSMETGESNTSDNMNIEVEEGRWR). Serine 330 is modified (phosphoserine). Low complexity predominate over residues 330-340 (SPTTSDSSNVE). Phosphothreonine is present on threonine 332. The residue at position 334 (serine 334) is a Phosphoserine. Residues 566-579 (TSMETGESNTSDNM) are compositionally biased toward polar residues.

It is found in the nucleus. This is an uncharacterized protein from Schizosaccharomyces pombe (strain 972 / ATCC 24843) (Fission yeast).